Reading from the N-terminus, the 147-residue chain is Bis(5'-nucleosyl)-tetraphosphatase [asymmetrical] (147 aa).

N-acetylalanine is present on alanine 2. The 138-residue stretch at 2–139 folds into the Nudix hydrolase domain; sequence ALRACGLIIF…EMKATLQEGH (138 aa). The short motif at 43-64 is the Nudix box element; the sequence is GHVDPGENDLETALRETQEETG.

The protein belongs to the Nudix hydrolase family. A divalent metal cation is required as a cofactor.

The catalysed reaction is P(1),P(4)-bis(5'-guanosyl) tetraphosphate + H2O = GMP + GTP + 2 H(+). The enzyme catalyses a 5'-end CoA-ribonucleoside in mRNA + H2O = a 5'-end phospho-adenosine-phospho-ribonucleoside in mRNA + (R)-4'-phosphopantetheine + 2 H(+). It carries out the reaction a 5'-end FAD-phospho-ribonucleoside in mRNA + H2O = a 5'-end phospho-adenosine-phospho-ribonucleoside in mRNA + FMN + 2 H(+). Catalyzes the asymmetric hydrolysis of diadenosine 5',5'''-P1,P4-tetraphosphate (Ap4A) to yield AMP and ATP. Exhibits decapping activity towards FAD-capped RNAs and dpCoA-capped RNAs in vitro. The sequence is that of Bis(5'-nucleosyl)-tetraphosphatase [asymmetrical] (Nudt2) from Rattus norvegicus (Rat).